A 312-amino-acid chain; its full sequence is Protoheme IX farnesyltransferase 1 (312 aa).

Transmembrane regions (helical) follow at residues 21–41 (GVLAAYLALTKPRVIELLLVT), 53–73 (IPSPWLVLVTLAGGAMSAGSA), 105–125 (SALVFGIVLGVVSFAVLALGA), 127–147 (LLAAVLSLAAILFYVFVYTLV), 156–176 (IVWGGAAGCMPVVIGWAAVTG), 182–202 (ALVMFGVVFLWTPPHFWSLAM), 225–245 (VSARILVYSWATVACTLLLVP), 246–266 (ATSWVYVAFAVLAGAAFLIVA), and 292–312 (LALLFVAIAVDSAVGLPSFVA).

The protein belongs to the UbiA prenyltransferase family. Protoheme IX farnesyltransferase subfamily.

It is found in the cell membrane. It catalyses the reaction heme b + (2E,6E)-farnesyl diphosphate + H2O = Fe(II)-heme o + diphosphate. Its pathway is porphyrin-containing compound metabolism; heme O biosynthesis; heme O from protoheme: step 1/1. Converts heme B (protoheme IX) to heme O by substitution of the vinyl group on carbon 2 of heme B porphyrin ring with a hydroxyethyl farnesyl side group. In Saccharopolyspora erythraea (strain ATCC 11635 / DSM 40517 / JCM 4748 / NBRC 13426 / NCIMB 8594 / NRRL 2338), this protein is Protoheme IX farnesyltransferase 1.